Consider the following 33-residue polypeptide: U23-ctenitoxin-Pn1a (33 aa).

3 disulfides stabilise this stretch: Cys-3/Cys-16, Cys-10/Cys-21, and Cys-15/Cys-30.

Expressed by the venom gland.

The protein localises to the secreted. Its function is as follows. Non-toxic to mice. The polypeptide is U23-ctenitoxin-Pn1a (Phoneutria nigriventer (Brazilian armed spider)).